We begin with the raw amino-acid sequence, 351 residues long: Cytoplasmic dynein 2 light intermediate chain 1 (351 aa).

The protein belongs to the dynein light intermediate chain family. Light intermediate chain of the cytoplasmic dynein complex 2, a multisubunit complex composed at least of eleven different proteins. The cytoplasmic dynein 2 complex consists of two catalytic heavy chains (HCs) and a number of non-catalytic subunits presented by intermediate chains (ICs), light intermediate chains (LICs) and light chains (LCs). Among them, a heavy chain (DYNC2H1), two intermediate chains (DYNC2I2 and DYNC2I1), a light intermediate chain (DYNC2LI1), and a light chain (DYNLT2B) are unique to the dynein-2 complex, but a subset of light chains are also shared by dynein-1 and dynein-2 complexes. Dynein-2 complex is built around two copies of cytoplasmic dynein 2 heavy chain 1 (DYNC2H1). The C-terminal region of DYNC2H1 forms the motor domain, which converts the energy from ATP hydrolysis into movement. Its N-terminal region forms the tail, an extended structure that binds the other subunits and holds the two heavy chains in a homodimer. Interacts with DYNC2H1 (via N-terminus); this interaction stabilizes the dynein-2 complex structure. Expressed in bone, brain, kidney, and cartilage. Lower expression in heart, liver, lung, placenta and thymus.

It localises to the golgi apparatus. The protein localises to the cytoplasm. Its subcellular location is the cell projection. It is found in the cilium. The protein resides in the cytoskeleton. It localises to the cilium basal body. The protein localises to the cilium axoneme. Its subcellular location is the microtubule organizing center. It is found in the centrosome. In terms of biological role, acts as one of several non-catalytic accessory components of the cytoplasmic dynein 2 complex (dynein-2 complex), a motor protein complex that drives the movement of cargos along microtubules within cilia and flagella in concert with the intraflagellar transport (IFT) system, facilitating the assembly of these organelles. Involved in the regulation of ciliary length. This is Cytoplasmic dynein 2 light intermediate chain 1 (DYNC2LI1) from Homo sapiens (Human).